The primary structure comprises 370 residues: 3-isopropylmalate dehydrogenase (370 aa).

Gly-77–Glu-90 contacts NAD(+). 4 residues coordinate substrate: Arg-97, Arg-107, Arg-135, and Asp-226. Residues Asp-226, Asp-250, and Asp-254 each contribute to the Mg(2+) site. Gly-290–Asn-302 is an NAD(+) binding site.

Belongs to the isocitrate and isopropylmalate dehydrogenases family. LeuB type 1 subfamily. Homodimer. Mg(2+) serves as cofactor. Requires Mn(2+) as cofactor.

It localises to the cytoplasm. It carries out the reaction (2R,3S)-3-isopropylmalate + NAD(+) = 4-methyl-2-oxopentanoate + CO2 + NADH. It functions in the pathway amino-acid biosynthesis; L-leucine biosynthesis; L-leucine from 3-methyl-2-oxobutanoate: step 3/4. Catalyzes the oxidation of 3-carboxy-2-hydroxy-4-methylpentanoate (3-isopropylmalate) to 3-carboxy-4-methyl-2-oxopentanoate. The product decarboxylates to 4-methyl-2 oxopentanoate. The protein is 3-isopropylmalate dehydrogenase of Rhizobium etli (strain ATCC 51251 / DSM 11541 / JCM 21823 / NBRC 15573 / CFN 42).